Here is a 732-residue protein sequence, read N- to C-terminus: Catalase-peroxidase (732 aa).

Residues 97–220 (WHSAGTYRTG…LAAVQMGLIY (124 aa)) constitute a cross-link (tryptophyl-tyrosyl-methioninium (Trp-Tyr) (with M-246)). Histidine 98 acts as the Proton acceptor in catalysis. Positions 220–246 (YVNPEGPDGKPDPVAAGKDIRETFGRM) form a cross-link, tryptophyl-tyrosyl-methioninium (Tyr-Met) (with W-97). Histidine 261 provides a ligand contact to heme b.

This sequence belongs to the peroxidase family. Peroxidase/catalase subfamily. In terms of assembly, homodimer or homotetramer. Heme b is required as a cofactor. In terms of processing, formation of the three residue Trp-Tyr-Met cross-link is important for the catalase, but not the peroxidase activity of the enzyme.

It carries out the reaction H2O2 + AH2 = A + 2 H2O. The catalysed reaction is 2 H2O2 = O2 + 2 H2O. Functionally, bifunctional enzyme with both catalase and broad-spectrum peroxidase activity. This Chlorobium phaeobacteroides (strain BS1) protein is Catalase-peroxidase.